The primary structure comprises 352 residues: MEVDPAEQIEKAGTLITIEGLKKDDYDKAIVNFLALREDLQLLAASPKGDVYRNTSGNGAEIFLNGMKIATDEDFLFSYHIKEPNKKLQRSLNRENKNLPRDCYRENIITILKSNINNRTQTLIDELIDSRDQYDNGEWSFIDVKKLIGLNTNRNILWADSSSKNIEKLIYSLYGMDTKKYEILALNSLQYRSMENDDRLKKQTLMHVSEKLKQQRIEEEAEKIKVKEQKPRKRFEEEDLPIEDLNPIEREGWDWAMEKARELCGFIRGWEKLYEEYQFVLMEKNHKYVGLCYTDQKIIKLSRGILKDEYSLLNTLVHEICHATTNGRDGTKKFERGLTDAFHPLFKLGQSK.

It to M.pneumoniae MPN_633 (in the N-terminal section), and M.pneumoniae MPN_634 (in the C-terminal section).

This is an uncharacterized protein from Mycoplasma pneumoniae (strain ATCC 29342 / M129 / Subtype 1) (Mycoplasmoides pneumoniae).